Reading from the N-terminus, the 443-residue chain is Chromosome partition protein MukF (443 aa).

A leucine-zipper region spans residues 209–237; that stretch reads LDETSGNLRELQDTLNAAGDKLQAQLLRI.

Belongs to the MukF family. In terms of assembly, interacts, and probably forms a ternary complex, with MukE and MukB via its C-terminal region. The complex formation is stimulated by calcium or magnesium. It is required for an interaction between MukE and MukB.

It localises to the cytoplasm. It is found in the nucleoid. Its function is as follows. Involved in chromosome condensation, segregation and cell cycle progression. May participate in facilitating chromosome segregation by condensation DNA from both sides of a centrally located replisome during cell division. Not required for mini-F plasmid partitioning. Probably acts via its interaction with MukB and MukE. Overexpression results in anucleate cells. It has a calcium binding activity. This chain is Chromosome partition protein MukF, found in Actinobacillus pleuropneumoniae serotype 5b (strain L20).